We begin with the raw amino-acid sequence, 307 residues long: Methionyl-tRNA formyltransferase (307 aa).

109-112 serves as a coordination point for (6S)-5,6,7,8-tetrahydrofolate; sequence SLLP.

This sequence belongs to the Fmt family.

The catalysed reaction is L-methionyl-tRNA(fMet) + (6R)-10-formyltetrahydrofolate = N-formyl-L-methionyl-tRNA(fMet) + (6S)-5,6,7,8-tetrahydrofolate + H(+). In terms of biological role, attaches a formyl group to the free amino group of methionyl-tRNA(fMet). The formyl group appears to play a dual role in the initiator identity of N-formylmethionyl-tRNA by promoting its recognition by IF2 and preventing the misappropriation of this tRNA by the elongation apparatus. The sequence is that of Methionyl-tRNA formyltransferase from Mycobacteroides abscessus (strain ATCC 19977 / DSM 44196 / CCUG 20993 / CIP 104536 / JCM 13569 / NCTC 13031 / TMC 1543 / L948) (Mycobacterium abscessus).